Consider the following 124-residue polypeptide: Large-conductance mechanosensitive channel (124 aa).

2 helical membrane-spanning segments follow: residues 15–35 and 67–87; these read MDLAVGVIIGAAFTAIVNSLV and GSFLNAVINFLIIALVVFFLI.

Belongs to the MscL family. Homopentamer.

It localises to the cell membrane. In terms of biological role, channel that opens in response to stretch forces in the membrane lipid bilayer. May participate in the regulation of osmotic pressure changes within the cell. The sequence is that of Large-conductance mechanosensitive channel from Lactobacillus johnsonii (strain CNCM I-12250 / La1 / NCC 533).